The chain runs to 472 residues: Tubulin gamma chain (472 aa).

142-148 (AGGTGSG) contacts GTP.

This sequence belongs to the tubulin family.

The protein resides in the cytoplasm. It localises to the cytoskeleton. Its subcellular location is the microtubule organizing center. In terms of biological role, tubulin is the major constituent of microtubules. The gamma chain is found at microtubule organizing centers (MTOC) such as the spindle poles, suggesting that it is involved in the minus-end nucleation of microtubule assembly. The chain is Tubulin gamma chain (TUBG) from Anemia phyllitidis (Fern).